We begin with the raw amino-acid sequence, 136 residues long: Large ribosomal subunit protein bL21 (136 aa).

Residues 107–136 are disordered; it reads RAAADRKTAPKRASAKAAADQTTAAQATAE. Low complexity predominate over residues 121–136; that stretch reads AKAAADQTTAAQATAE.

This sequence belongs to the bacterial ribosomal protein bL21 family. Part of the 50S ribosomal subunit. Contacts protein L20.

This protein binds to 23S rRNA in the presence of protein L20. The sequence is that of Large ribosomal subunit protein bL21 from Acidothermus cellulolyticus (strain ATCC 43068 / DSM 8971 / 11B).